Consider the following 730-residue polypeptide: Jacalin-related lectin 5 (730 aa).

The Jacalin-type lectin 1 domain maps to 1–126 (MSWDDGKHTK…LNSIDAHFAP (126 aa)). Residues 121–450 (DAHFAPAPPP…GNQWDDGTDH (330 aa)) form a disordered region. Low complexity-rich tracts occupy residues 138-153 (GASGIGSDSGSIGSAG), 168-179 (AGGSKPSSGSAG), 196-207 (AGGSKPSSGSAG), and 248-261 (TEKNAGGSKSSSGS). Polar residues predominate over residues 275–307 (ETVSNIGDTESNAGGSKSNDGANNGASGIESNA). The span at 314–323 (FGAGGTGGIG) shows a compositional bias: gly residues. Over residues 343 to 358 (DGASGIGSNDGSTGTN) the composition is skewed to low complexity. Composition is skewed to polar residues over residues 366-375 (DSNIEGTENN) and 388-416 (IGNSDGSTGTSPEGTESNADGTKTNTGGK). Low complexity predominate over residues 417 to 429 (ESNTGSESNTNSS). Jacalin-type lectin domains follow at residues 430–572 (PQKL…YFVP) and 584–727 (PNKV…YFIP).

This sequence belongs to the jacalin lectin family.

The chain is Jacalin-related lectin 5 (JAL5) from Arabidopsis thaliana (Mouse-ear cress).